The following is a 686-amino-acid chain: L-type lectin-domain containing receptor kinase VII.1 (686 aa).

The N-terminal stretch at 1–20 is a signal peptide; that stretch reads MKALLFLLTLFLILPNPISA. Residues 21–256 form a legume-lectin like region; that stretch reads IDFIFNGFND…SHKILAWSFS (236 aa). Over 21–286 the chain is Extracellular; it reads IDFIFNGFND…PKDSIVKAKW (266 aa). N-linked (GlcNAc...) asparagine glycosylation is found at N29, N34, N52, N64, N111, N123, N168, N203, N224, and N259. A helical membrane pass occupies residues 287–307; sequence FVFVLVLICFLVVALVGLVLF. The Cytoplasmic segment spans residues 308 to 686; sequence AVVRKRLERA…SWNSSILEGR (379 aa). The region spanning 347-628 is the Protein kinase domain; the sequence is FDEKNVIGIG…VFEGDKAEIF (282 aa). Residues 353 to 361 and K376 each bind ATP; that span reads IGIGGNGKV. The Proton acceptor role is filled by D475.

In the C-terminal section; belongs to the protein kinase superfamily. Ser/Thr protein kinase family. It in the N-terminal section; belongs to the leguminous lectin family.

Its subcellular location is the cell membrane. The enzyme catalyses L-seryl-[protein] + ATP = O-phospho-L-seryl-[protein] + ADP + H(+). It carries out the reaction L-threonyl-[protein] + ATP = O-phospho-L-threonyl-[protein] + ADP + H(+). The chain is L-type lectin-domain containing receptor kinase VII.1 (LECRK71) from Arabidopsis thaliana (Mouse-ear cress).